Here is a 542-residue protein sequence, read N- to C-terminus: Excitatory amino acid transporter 1 (542 aa).

Topologically, residues 1–47 (MTKSNGEEPKMGGRMERFQQGVRKRTLLAKKKVQNITKEDVKSYLFR) are cytoplasmic. Residues 48-68 (NAFVLLTVTAVIVGTILGFTL) traverse the membrane as a helical segment. Topologically, residues 69–86 (RPYRMSYREVKYFSFPGE) are extracellular. A helical membrane pass occupies residues 87–108 (LLMRMLQMLVLPLIISSLVTGM). Topologically, residues 109–122 (AALDSKASGKMGMR) are cytoplasmic. The chain crosses the membrane as a helical span at residues 123–145 (AVVYYMTTTIIAVVIGIIIVIII). Residues 146–236 (HPGKGTKENM…ITEELVPVPG (91 aa)) are Extracellular-facing. A helical transmembrane segment spans residues 237–260 (SVNGVNALGLVVFSMCFGFVIGNM). The Cytoplasmic segment spans residues 261–269 (KEQGQALRE). The helical transmembrane segment at 270 to 297 (FFDSLNEAIMRLVAVIMWYAPVGILFLI) threads the bilayer. Residues 298-318 (AGKIVEMEDMGVIGGQLAMYT) are Extracellular-facing. The chain crosses the membrane as a helical span at residues 319 to 340 (VTVIVGLLIHAVIVLPLLYFLV). At 341 to 345 (TRKNP) the chain is on the cytoplasmic side. The discontinuously helical intramembrane region spans 346 to 376 (WVFIGGLLQALITALGTSSSSATLPITFKCL). 363 to 365 (SSS) contacts L-aspartate. Over 377–385 (EENNGVDKR) the chain is Cytoplasmic. The helical transmembrane segment at 386-412 (VTRFVLPVGATINMDGTALYEALAAIF) threads the bilayer. The Na(+) site is built by G394, T396, and N398. T402 is a binding site for L-aspartate. The Extracellular segment spans residues 413–425 (IAQVNNFELNFGQ). The discontinuously helical intramembrane region spans 426-459 (IITISITATAASIGAAGIPQAGLVTMVIVLTSVG). An L-aspartate-binding site is contributed by 443–447 (IPQAG). The Extracellular portion of the chain corresponds to 460–472 (LPTDDITLIIAVD). The chain crosses the membrane as a helical span at residues 473–494 (WFLDRLRTTTNVLGDSLGAGIV). Residues D476 and N483 each coordinate L-aspartate. 2 residues coordinate Na(+): N483 and D487. At 495-542 (EHLSRHELKNRDVEMGNSVIEENEMKKPYQLIAQDNETEKPIDSETKM) the chain is on the cytoplasmic side. Residue S512 is modified to Phosphoserine.

This sequence belongs to the dicarboxylate/amino acid:cation symporter (DAACS) (TC 2.A.23) family. SLC1A3 subfamily. Homotrimer. In terms of processing, glycosylated. In terms of tissue distribution, detected in brain. Detected at very much lower levels in heart, lung, placenta and skeletal muscle. Highly expressed in cerebellum, but also found in frontal cortex, hippocampus and basal ganglia.

The protein localises to the cell membrane. It carries out the reaction K(+)(in) + L-glutamate(out) + 3 Na(+)(out) + H(+)(out) = K(+)(out) + L-glutamate(in) + 3 Na(+)(in) + H(+)(in). The catalysed reaction is K(+)(in) + L-aspartate(out) + 3 Na(+)(out) + H(+)(out) = K(+)(out) + L-aspartate(in) + 3 Na(+)(in) + H(+)(in). It catalyses the reaction D-aspartate(out) + K(+)(in) + 3 Na(+)(out) + H(+)(out) = D-aspartate(in) + K(+)(out) + 3 Na(+)(in) + H(+)(in). In terms of biological role, sodium-dependent, high-affinity amino acid transporter that mediates the uptake of L-glutamate and also L-aspartate and D-aspartate. Functions as a symporter that transports one amino acid molecule together with two or three Na(+) ions and one proton, in parallel with the counter-transport of one K(+) ion. Mediates Cl(-) flux that is not coupled to amino acid transport; this avoids the accumulation of negative charges due to aspartate and Na(+) symport. Plays a redundant role in the rapid removal of released glutamate from the synaptic cleft, which is essential for terminating the postsynaptic action of glutamate. The polypeptide is Excitatory amino acid transporter 1 (Homo sapiens (Human)).